Here is a 248-residue protein sequence, read N- to C-terminus: Homeobox protein BarH-like 1 (248 aa).

Residues 135-194 (GRRSRTVFTELQLMGLEKRFEKQKYLSTPDRIDLAESLGLSQLQVKTWYQNRRMKWKKIV) constitute a DNA-binding region (homeobox). The disordered stretch occupies residues 197-248 (GGGLESPTKPKGRPKKNSIPTSEQLSEQERTREADRLSDGGASSLSDANQEE). The span at 223–234 (EQERTREADRLS) shows a compositional bias: basic and acidic residues. A compositionally biased stretch (polar residues) spans 237-248 (GASSLSDANQEE).

Belongs to the BAR homeobox family.

It localises to the nucleus. Transcription factor, is involved in craniofacial development, and in stomach organogenesis. The chain is Homeobox protein BarH-like 1 (barx1) from Danio rerio (Zebrafish).